Consider the following 65-residue polypeptide: Large ribosomal subunit protein bL33c (65 aa).

It belongs to the bacterial ribosomal protein bL33 family.

Its subcellular location is the plastid. The protein localises to the chloroplast. This Porphyra purpurea (Red seaweed) protein is Large ribosomal subunit protein bL33c (rpl33).